An 835-amino-acid chain; its full sequence is Protein translocase subunit SecA (835 aa).

Residues Gln-85, 103–107 (GEGKT), and Asp-492 each bind ATP. A disordered region spans residues 788 to 807 (VQGEAVHPSSDGEEAKKKPV). Residues Cys-819, Cys-821, Cys-830, and Cys-831 each coordinate Zn(2+).

This sequence belongs to the SecA family. As to quaternary structure, monomer and homodimer. Part of the essential Sec protein translocation apparatus which comprises SecA, SecYEG and auxiliary proteins SecDF. Other proteins may also be involved. The cofactor is Zn(2+).

The protein resides in the cell membrane. It localises to the cytoplasm. The catalysed reaction is ATP + H2O + cellular proteinSide 1 = ADP + phosphate + cellular proteinSide 2.. Part of the Sec protein translocase complex. Interacts with the SecYEG preprotein conducting channel. Has a central role in coupling the hydrolysis of ATP to the transfer of proteins into and across the cell membrane, serving as an ATP-driven molecular motor driving the stepwise translocation of polypeptide chains across the membrane. This Bacillus cereus (strain G9842) protein is Protein translocase subunit SecA.